The following is a 508-amino-acid chain: Photosystem II CP47 reaction center protein (508 aa).

6 consecutive transmembrane segments (helical) span residues 21–36 (AVHL…WAGS), 101–115 (IVLS…IWHW), 140–156 (GIHL…FGAF), 203–218 (IAAG…FHLS), 237–252 (VLSS…AFVV), and 457–472 (TFAL…HGAR).

The protein belongs to the PsbB/PsbC family. PsbB subfamily. PSII is composed of 1 copy each of membrane proteins PsbA, PsbB, PsbC, PsbD, PsbE, PsbF, PsbH, PsbI, PsbJ, PsbK, PsbL, PsbM, PsbT, PsbX, PsbY, PsbZ, Psb30/Ycf12, at least 3 peripheral proteins of the oxygen-evolving complex and a large number of cofactors. It forms dimeric complexes. Binds multiple chlorophylls. PSII binds additional chlorophylls, carotenoids and specific lipids. serves as cofactor.

It localises to the plastid. Its subcellular location is the chloroplast thylakoid membrane. Functionally, one of the components of the core complex of photosystem II (PSII). It binds chlorophyll and helps catalyze the primary light-induced photochemical processes of PSII. PSII is a light-driven water:plastoquinone oxidoreductase, using light energy to abstract electrons from H(2)O, generating O(2) and a proton gradient subsequently used for ATP formation. This is Photosystem II CP47 reaction center protein from Marchantia polymorpha (Common liverwort).